We begin with the raw amino-acid sequence, 1361 residues long: MEVLMAERANLVFHNKAIDGTAMKRLISRLIDHFGMAYTSHILDQLKTLGFQQATATSISLGIDDLLTIPSKGWLVQDAEQQSLILEKHHHYGNVHAVEKLRQSIEIWYSTSEYLRQEMNPNFRMTDPYNPVHIMSFSGARGNVSQVHQLVGMRGLMSDPQGQMIDLPIQSNLREGLSLTEYIISCYGARKGVVDTAVRTSDAGYLTRRLVEVVQHIVVRRRDCGTIRGISVSPQNSTMPERILIQTLIGRVLADDIYMGSRCIATRNQDIGVGLVNRFITLRTQLISIRTPFTCRSASWICRLCYGRSPTHGGLVELGEAVGIIAGQSIGEPGTQLTLRTFHTGGVFTGGTAEHVRAPSNGKIQFNEDLVHPTRTRHGHPAFLCYIDLYVTIESDDILHNVNIPPKSFLLVQNDQYVESEQVIAEIRAGTSTLNFKERVRKHIYSDSEGEMHWSTDVYHAPEFTYGNVHLLPKTSHLWVLSGKPYRSSVVPFSLSKDQDQMNTHSLSFEQIYISNPSVTNDQVKDKLSDSFSKKEDRITDYSELNRIGHCNLIYPAKNLDLLAKKRRNRFIIPFQGSQERKKELMSLSGISIEIPINGIFRKNSIFAYFDDPRYRRKSSGITKYGTIEMHSIVKKEDLIEYRGVKEFRPKYQMKVDRFFFIPEEVHILAGSSSIMVRNNSIIGVDTWITLNTRSRIGGVVRVERKKKKIELTIFSGDIHFPGETDKISRHSGILIPPSRKNSKDSKNLKKWIYVQRITPTKKKYFVLVRPVVPYEITDGINLATLFPQDLLQERDNVQLRVVNYILYGNGKVTRGISDTSIQLVRTCLVLNWNQDKKGSSIEEARGSFVEVRTNGMIQDFLKVNLVKPAISYISKRNDPSSEKKEGSDHTNMNPFYSIYIYPKTKLQKSFNQNQGTVRTLLGINKECQFFLILSSSNCFRIGPFKGVKYPKELIKKDPLIPIRNSFGPLGTALQIANFFSFYYLITHNQILVTNYLQLDNLKQTFQPFKFQYYLMDENGRIYNPDPCSNIIFNPFKLNWYFLHYHFCEETSTKIDLGQFVCENVCITKKGTHLKSGQVLIVQFDSVVIRSAKPYLATPGATLHGHYGEIIYEGDTLVTFIYEKSRSGDITQGLPKVEQVLEVRSIDSISINLEKRIDSWNERITRILGSPWGFLIGAELTIAQSRISLVNKIQKVYRSQGVQIHNRHIEIIVRQITSKVLVSEDGMSNVFLPGELIGLFRAERTGRALEEAICYRATLLGITRASLNTQSFISEASFQETARVLAKAALRGRIDWLKGLKENVVLGGMIPVGTGFKGFVHHSSQHKDIPLKTKKQNLFEGEMGDILFYHRELFESCLSKN.

Residues cysteine 224, cysteine 295, cysteine 302, and cysteine 305 each coordinate Zn(2+).

The protein belongs to the RNA polymerase beta' chain family. RpoC2 subfamily. In plastids the minimal PEP RNA polymerase catalytic core is composed of four subunits: alpha, beta, beta', and beta''. When a (nuclear-encoded) sigma factor is associated with the core the holoenzyme is formed, which can initiate transcription. The cofactor is Zn(2+).

Its subcellular location is the plastid. The protein resides in the chloroplast. It carries out the reaction RNA(n) + a ribonucleoside 5'-triphosphate = RNA(n+1) + diphosphate. Functionally, DNA-dependent RNA polymerase catalyzes the transcription of DNA into RNA using the four ribonucleoside triphosphates as substrates. The protein is DNA-directed RNA polymerase subunit beta'' of Spinacia oleracea (Spinach).